The sequence spans 321 residues: Peroxidase 27 (321 aa).

Positions 1-23 (MAASKRLVVSCLFLVLLFAQANS) are cleaved as a signal peptide. Intrachain disulfides connect cysteine 35–cysteine 113, cysteine 68–cysteine 73, cysteine 119–cysteine 317, and cysteine 196–cysteine 228. The active-site Proton acceptor is the histidine 66. Ca(2+) contacts are provided by aspartate 67, valine 70, glycine 72, aspartate 74, and serine 76. Proline 159 serves as a coordination point for substrate. Asparagine 164 carries an N-linked (GlcNAc...) asparagine glycan. Histidine 189 is a binding site for heme b. Position 190 (threonine 190) interacts with Ca(2+). A glycan (N-linked (GlcNAc...) asparagine) is linked at asparagine 205. Residues aspartate 240, serine 243, and aspartate 248 each contribute to the Ca(2+) site.

This sequence belongs to the peroxidase family. Classical plant (class III) peroxidase subfamily. It depends on heme b as a cofactor. The cofactor is Ca(2+). Expressed in the whole plant, but preferentially in roots and flowers.

It localises to the secreted. The enzyme catalyses 2 a phenolic donor + H2O2 = 2 a phenolic radical donor + 2 H2O. Its function is as follows. Removal of H(2)O(2), oxidation of toxic reductants, biosynthesis and degradation of lignin, suberization, auxin catabolism, response to environmental stresses such as wounding, pathogen attack and oxidative stress. These functions might be dependent on each isozyme/isoform in each plant tissue. The polypeptide is Peroxidase 27 (PER27) (Arabidopsis thaliana (Mouse-ear cress)).